The chain runs to 236 residues: UPF0257 lipoprotein YnfC (236 aa).

Residues 1–16 (MKYKLLPCLLAILLTG) form the signal peptide. Cysteine 17 carries N-palmitoyl cysteine lipidation. Cysteine 17 carries S-diacylglycerol cysteine lipidation.

It belongs to the UPF0257 family.

It is found in the cell membrane. This chain is UPF0257 lipoprotein YnfC, found in Escherichia coli O45:K1 (strain S88 / ExPEC).